The chain runs to 84 residues: Delta-thalatoxin-Tas1a (84 aa).

The N-terminal stretch at 1-19 (MAYLKIVLVALMLVLAVSA) is a signal peptide. Positions 20–33 (MRRPDQQDQDISVA) are excised as a propeptide. 3 cysteine pairs are disulfide-bonded: cysteine 38/cysteine 78, cysteine 40/cysteine 68, and cysteine 61/cysteine 79.

This sequence belongs to the sea anemone sodium channel inhibitory toxin family. Type II subfamily.

It localises to the secreted. It is found in the nematocyst. Functionally, binds specifically to the voltage-gated sodium channel (Nav) and delays its inactivation. This chain is Delta-thalatoxin-Tas1a, found in Thalassianthus aster (Fuzzy-tipped anemone).